We begin with the raw amino-acid sequence, 257 residues long: Imidazole glycerol phosphate synthase subunit HisF (257 aa).

Residues D11 and D130 contribute to the active site.

The protein belongs to the HisA/HisF family. As to quaternary structure, heterodimer of HisH and HisF.

Its subcellular location is the cytoplasm. It catalyses the reaction 5-[(5-phospho-1-deoxy-D-ribulos-1-ylimino)methylamino]-1-(5-phospho-beta-D-ribosyl)imidazole-4-carboxamide + L-glutamine = D-erythro-1-(imidazol-4-yl)glycerol 3-phosphate + 5-amino-1-(5-phospho-beta-D-ribosyl)imidazole-4-carboxamide + L-glutamate + H(+). It participates in amino-acid biosynthesis; L-histidine biosynthesis; L-histidine from 5-phospho-alpha-D-ribose 1-diphosphate: step 5/9. In terms of biological role, IGPS catalyzes the conversion of PRFAR and glutamine to IGP, AICAR and glutamate. The HisF subunit catalyzes the cyclization activity that produces IGP and AICAR from PRFAR using the ammonia provided by the HisH subunit. The chain is Imidazole glycerol phosphate synthase subunit HisF from Afipia carboxidovorans (strain ATCC 49405 / DSM 1227 / KCTC 32145 / OM5) (Oligotropha carboxidovorans).